The sequence spans 636 residues: Probable potassium transport system protein Kup (636 aa).

12 helical membrane passes run 23-43, 63-83, 114-134, 150-170, 182-202, 217-237, 260-280, 298-318, 350-370, 379-399, 407-427, and 432-452; these read LVIGAIGVVFGDIGTSPLYSL, IISLLFWAMTIVVSIKYVVFV, VLMMLGIFGACMFYGDAVITP, PQLSRFVIPITLVILVALFLI, FGPVMVVWFVTLGLLGLYNLV, ISFLIAHSLQAFIVLGSVFLV, WFVLVMPCLILNYFGQGAMLL, LLIPMVVLATCATVIASQAVI, IYLPVINWILLVLVVAVVISF, AYGIAVTTTMVITTFLAAVVM, PALVTLLGLSFLLVDLAFFAA, and VAEGGWFPLLLGSTAFFLLMT.

It belongs to the HAK/KUP transporter (TC 2.A.72) family.

Its subcellular location is the cell inner membrane. The enzyme catalyses K(+)(in) + H(+)(in) = K(+)(out) + H(+)(out). Its function is as follows. Transport of potassium into the cell. Likely operates as a K(+):H(+) symporter. The sequence is that of Probable potassium transport system protein Kup from Cupriavidus pinatubonensis (strain JMP 134 / LMG 1197) (Cupriavidus necator (strain JMP 134)).